The primary structure comprises 323 residues: tRNA dimethylallyltransferase (323 aa).

Gly-15–Thr-22 lines the ATP pocket. Thr-17–Thr-22 is a substrate binding site. 2 interaction with substrate tRNA regions span residues Asp-40–Gln-43 and Gln-164–Arg-168.

Belongs to the IPP transferase family. As to quaternary structure, monomer. Mg(2+) is required as a cofactor.

It carries out the reaction adenosine(37) in tRNA + dimethylallyl diphosphate = N(6)-dimethylallyladenosine(37) in tRNA + diphosphate. Catalyzes the transfer of a dimethylallyl group onto the adenine at position 37 in tRNAs that read codons beginning with uridine, leading to the formation of N6-(dimethylallyl)adenosine (i(6)A). The protein is tRNA dimethylallyltransferase of Chloroherpeton thalassium (strain ATCC 35110 / GB-78).